Reading from the N-terminus, the 117-residue chain is Large ribosomal subunit protein bL20 (117 aa).

The protein belongs to the bacterial ribosomal protein bL20 family.

Its function is as follows. Binds directly to 23S ribosomal RNA and is necessary for the in vitro assembly process of the 50S ribosomal subunit. It is not involved in the protein synthesizing functions of that subunit. This chain is Large ribosomal subunit protein bL20, found in Geotalea daltonii (strain DSM 22248 / JCM 15807 / FRC-32) (Geobacter daltonii).